A 376-amino-acid chain; its full sequence is 26S proteasome non-ATPase regulatory subunit 4 (376 aa).

The VWFA domain maps to 5-188 (STMVCVDNSE…LADALISSPI (184 aa)). Residue lysine 122 forms a Glycyl lysine isopeptide (Lys-Gly) (interchain with G-Cter in SUMO2) linkage. The interval 197 to 262 (LGLGASDFEF…TEDSDDALLK (66 aa)) is interaction with UBQLN1. The 20-residue stretch at 211 to 230 (SADPELALALRVSMEEQRQR) folds into the UIM 1 domain. Residues 224–237 (MEEQRQRQEEEARR) are compositionally biased toward basic and acidic residues. The tract at residues 224-257 (MEEQRQRQEEEARRAAAASAAEAGIATPGTEDSD) is disordered. Residues threonine 250 and threonine 253 each carry the phosphothreonine modification. 2 positions are modified to phosphoserine: serine 256 and alanine 259. The UIM 2 domain occupies 282 to 301 (TEEEQIAYAMQMSLQGTEFS). The segment at 355–376 (MGALASQATKDGKNDKKEEEKK) is disordered. Serine 360 is modified (phosphoserine). Positions 364 to 376 (KDGKNDKKEEEKK) are enriched in basic and acidic residues.

Belongs to the proteasome subunit S5A family. Component of the 19S proteasome regulatory particle complex. The 26S proteasome consists of a 20S core particle (CP) and two 19S regulatory subunits (RP). The regulatory particle is made of a lid composed of 9 subunits, a base containing 6 ATPases and few additional components including PSMD4. Interacts with NUB1. Interacts with SQSTM1. Interacts with UBQLN4. Interacts with UBE3A. Interacts with UBQLN1 (via ubiquitin-like domain). Interacts with DDI2. As to expression, isoform Rpn10A is ubiquitous whereas isoform Rpn10E is mostly expressed in the embryonic brain.

In terms of biological role, component of the 26S proteasome, a multiprotein complex involved in the ATP-dependent degradation of ubiquitinated proteins. This complex plays a key role in the maintenance of protein homeostasis by removing misfolded or damaged proteins, which could impair cellular functions, and by removing proteins whose functions are no longer required. Therefore, the proteasome participates in numerous cellular processes, including cell cycle progression, apoptosis, or DNA damage repair. PSMD4 acts as an ubiquitin receptor subunit through ubiquitin-interacting motifs and selects ubiquitin-conjugates for destruction. Displays a preferred selectivity for longer polyubiquitin chains. This is 26S proteasome non-ATPase regulatory subunit 4 (Psmd4) from Mus musculus (Mouse).